The sequence spans 299 residues: Nucleotide-binding protein DIP1313 (299 aa).

22–29 is an ATP binding site; sequence GLSGAGLS. 73 to 76 provides a ligand contact to GTP; sequence DVRS.

The protein belongs to the RapZ-like family.

Displays ATPase and GTPase activities. This is Nucleotide-binding protein DIP1313 from Corynebacterium diphtheriae (strain ATCC 700971 / NCTC 13129 / Biotype gravis).